Reading from the N-terminus, the 188-residue chain is GMP synthase [glutamine-hydrolyzing] subunit A (188 aa).

A Glutamine amidotransferase type-1 domain is found at 1 to 188 (MIVILDNGGQ…FCKVCGYKFE (188 aa)). The active-site Nucleophile is cysteine 76. Catalysis depends on residues histidine 163 and glutamate 165.

In terms of assembly, heterodimer composed of a glutamine amidotransferase subunit (A) and a GMP-binding subunit (B).

It catalyses the reaction XMP + L-glutamine + ATP + H2O = GMP + L-glutamate + AMP + diphosphate + 2 H(+). It participates in purine metabolism; GMP biosynthesis; GMP from XMP (L-Gln route): step 1/1. In terms of biological role, catalyzes the synthesis of GMP from XMP. The chain is GMP synthase [glutamine-hydrolyzing] subunit A from Methanocaldococcus jannaschii (strain ATCC 43067 / DSM 2661 / JAL-1 / JCM 10045 / NBRC 100440) (Methanococcus jannaschii).